Here is a 253-residue protein sequence, read N- to C-terminus: Aspartic acid-rich protein (253 aa).

An N-terminal signal peptide occupies residues 1-22; it reads MYLFIYIFFFFFFFFFFVIVQK. The segment at 211 to 253 is disordered; it reads DDFDEEFDDDDDDDDDDDDDDDDDDKDDDLDGDDDGNNDDNDD.

Belongs to the nucleosome assembly protein (NAP) family.

In Plasmodium falciparum (isolate fcm17 / Senegal), this protein is Aspartic acid-rich protein.